The following is a 670-amino-acid chain: Catalase (670 aa).

Catalysis depends on residues His-61 and Asn-132. Tyr-345 lines the heme pocket.

This sequence belongs to the catalase family. In terms of assembly, homotetramer. The cofactor is heme.

The protein localises to the peroxisome matrix. The catalysed reaction is 2 H2O2 = O2 + 2 H2O. In terms of biological role, catalyzes the degradation of hydrogen peroxide (H(2)O(2)) generated by peroxisomal oxidases to water and oxygen, thereby protecting cells from the toxic effects of hydrogen peroxide. This is Catalase from Penicillium janthinellum (Penicillium vitale).